We begin with the raw amino-acid sequence, 90 residues long: Probable Fe(2+)-trafficking protein (90 aa).

It belongs to the Fe(2+)-trafficking protein family.

Could be a mediator in iron transactions between iron acquisition and iron-requiring processes, such as synthesis and/or repair of Fe-S clusters in biosynthetic enzymes. The protein is Probable Fe(2+)-trafficking protein of Pseudomonas fluorescens (strain Pf0-1).